Consider the following 279-residue polypeptide: Elongation factor Ts (279 aa).

Positions 80-83 (TDFV) are involved in Mg(2+) ion dislocation from EF-Tu.

It belongs to the EF-Ts family.

The protein localises to the cytoplasm. Functionally, associates with the EF-Tu.GDP complex and induces the exchange of GDP to GTP. It remains bound to the aminoacyl-tRNA.EF-Tu.GTP complex up to the GTP hydrolysis stage on the ribosome. This Borreliella afzelii (strain PKo) (Borrelia afzelii) protein is Elongation factor Ts.